Reading from the N-terminus, the 563-residue chain is Arginine--tRNA ligase (563 aa).

The 'HIGH' region signature appears at 121–131 (PNIAKPFSIGH).

This sequence belongs to the class-I aminoacyl-tRNA synthetase family. In terms of assembly, monomer.

Its subcellular location is the cytoplasm. It catalyses the reaction tRNA(Arg) + L-arginine + ATP = L-arginyl-tRNA(Arg) + AMP + diphosphate. This is Arginine--tRNA ligase from Streptococcus pyogenes serotype M2 (strain MGAS10270).